The following is a 102-amino-acid chain: Small ribosomal subunit protein uS10 (102 aa).

This sequence belongs to the universal ribosomal protein uS10 family. In terms of assembly, part of the 30S ribosomal subunit.

In terms of biological role, involved in the binding of tRNA to the ribosomes. In Methanococcus maripaludis (strain C5 / ATCC BAA-1333), this protein is Small ribosomal subunit protein uS10.